The following is a 23-amino-acid chain: Caerin-4.1 (23 aa).

As to expression, expressed by the skin parotoid and/or rostral glands.

The protein localises to the secreted. Functionally, antibacterial peptide, that adopts an alpha helical conformation which can disrupt bacterial membranes. Each caerin displays a different antimicrobial specificity. The chain is Caerin-4.1 from Ranoidea caerulea (Green tree frog).